We begin with the raw amino-acid sequence, 345 residues long: Tyrosine--tRNA ligase (345 aa).

Tyr36 contributes to the L-tyrosine binding site. Residues 41-49 (PTGEMHIGH) carry the 'HIGH' region motif. L-tyrosine-binding residues include Tyr163, Gln167, Asp170, and Gln185.

This sequence belongs to the class-I aminoacyl-tRNA synthetase family. TyrS type 3 subfamily. In terms of assembly, homodimer.

The protein resides in the cytoplasm. It catalyses the reaction tRNA(Tyr) + L-tyrosine + ATP = L-tyrosyl-tRNA(Tyr) + AMP + diphosphate + H(+). In terms of biological role, catalyzes the attachment of tyrosine to tRNA(Tyr) in a two-step reaction: tyrosine is first activated by ATP to form Tyr-AMP and then transferred to the acceptor end of tRNA(Tyr). The chain is Tyrosine--tRNA ligase from Natronomonas pharaonis (strain ATCC 35678 / DSM 2160 / CIP 103997 / JCM 8858 / NBRC 14720 / NCIMB 2260 / Gabara) (Halobacterium pharaonis).